Reading from the N-terminus, the 246-residue chain is uncharacterized protein (246 aa).

Serine 194 is modified (phosphoserine).

This is an uncharacterized protein from Schizosaccharomyces pombe (strain 972 / ATCC 24843) (Fission yeast).